We begin with the raw amino-acid sequence, 414 residues long: uncharacterized protein (414 aa).

The signal sequence occupies residues 1–20; the sequence is MKKLLAIGILCIMVTAVMSG. Residue Cys-21 is the site of S-archaeol cysteine attachment. The Fe/B12 periplasmic-binding domain maps to 119–389; the sequence is RVIVMSSTEI…DLATILHPEA (271 aa).

It is found in the cell membrane. This is an uncharacterized protein from Methanocaldococcus jannaschii (strain ATCC 43067 / DSM 2661 / JAL-1 / JCM 10045 / NBRC 100440) (Methanococcus jannaschii).